Consider the following 151-residue polypeptide: MLKCQNNASLGLDLGEKTLGIALSQTGIIAQNLKTIFFATHKYDRLIAPLQEIIFQYQIKTIVLGYPKHMNNDIGIKAKISSDFKKTLENKFEQVKVILWDERLSTVQAIQMLKTNNKKKGKILQMKDEIAATIILQNYLDYIKLHTNKEH.

The protein belongs to the YqgF nuclease family.

It localises to the cytoplasm. Its function is as follows. Could be a nuclease involved in processing of the 5'-end of pre-16S rRNA. This chain is Putative pre-16S rRNA nuclease, found in Onion yellows phytoplasma (strain OY-M).